The following is a 174-amino-acid chain: Stigma-specific STIG1-like protein 4 (174 aa).

An N-terminal signal peptide occupies residues 1 to 25 (MMSIKLTLCALIFFLLNSLLHHVLG). Residues 140–174 (PSSQPGKRHRRHKFHRPRPPPSPDSKLNYDDHDDE) form a disordered region. Positions 145–157 (GKRHRRHKFHRPR) are enriched in basic residues.

It belongs to the STIG1 family.

Its subcellular location is the secreted. Functionally, endosperm-specific cysteine-rich protein that acts downstream of BHLH95/ZOU to modify the interface between embryo and endosperm and mediate the separation of these two tissues during seed development. Necessary for the biogenesis of the embryo sheath, an extracuticular endosperm-derived structure at the surface of the embryo. Required for the separation of embryo and endosperm, and for normal progression of the embryo through the endosperm tissue. Required for the formation of a normal embryonic cuticle. The protein is Stigma-specific STIG1-like protein 4 of Arabidopsis thaliana (Mouse-ear cress).